Consider the following 293-residue polypeptide: Ribosomal protein L11 methyltransferase (293 aa).

Positions 145, 166, 188, and 230 each coordinate S-adenosyl-L-methionine.

This sequence belongs to the methyltransferase superfamily. PrmA family.

The protein localises to the cytoplasm. The catalysed reaction is L-lysyl-[protein] + 3 S-adenosyl-L-methionine = N(6),N(6),N(6)-trimethyl-L-lysyl-[protein] + 3 S-adenosyl-L-homocysteine + 3 H(+). Functionally, methylates ribosomal protein L11. This chain is Ribosomal protein L11 methyltransferase, found in Klebsiella pneumoniae (strain 342).